A 308-amino-acid chain; its full sequence is MEPGSVENLCVVYRSHDFLVVNKHWDVRIDSKAWRETLTLQKQLRHRFPELADPDTYYGFRFCHQLDFSTSGALCVALNKAAAGSAYRCFKDRRVTKAYLALVRGHVQESRMTISYAIGKNSTEGRTHTMCIEGTQGCENPKPSLTELVVLEHGLYAGDPVSKVLLQPLTGRTHQLRVHCSALGHPIVGDLTYGHALGQEDQPFRMMLHAFYLRIPTSAECVEACTPDPFVPSLDACWSPHTLLQPLDELVQVLRAAPDPDPSEGGPGPCSPCTPLPGPGRPPPPPETEVQRASCLQWLSEWTLEPDN.

The residue at position 1 (Met1) is an N-acetylmethionine. The active site involves Asp67. The segment at 257–292 (APDPDPSEGGPGPCSPCTPLPGPGRPPPPPETEVQR) is disordered. Residues 269-287 (PCSPCTPLPGPGRPPPPPE) show a composition bias toward pro residues.

The protein belongs to the pseudouridine synthase RluA family.

This chain is RNA pseudouridylate synthase domain-containing protein 1 (RPUSD1), found in Bos taurus (Bovine).